Here is a 625-residue protein sequence, read N- to C-terminus: Archaeosine synthase subunit alpha (625 aa).

Positions 556–624 (KYVVKIDDFV…VAVDVRHVKK (69 aa)) constitute a PUA domain.

The protein belongs to the archaeosine synthase type 1 family. In terms of assembly, forms a robust complex with the archaeosine synthase beta subunit RaSEA. Formation of this complex highly increases lysine transfer activity. The complex likely consists of an alpha(2)beta(2) heterotetrameric structure.

The catalysed reaction is 7-cyano-7-carbaguanosine(15) in tRNA + L-lysine = 7-N-[(5S)-5-amino-5-carboxypentyl]formamidino-7-deazaguanosine(15) in tRNA. Its pathway is tRNA modification; archaeosine-tRNA biosynthesis. Functions in the biosynthesis of archaeosine, a modified nucleoside present in the dihydrouridine loop (D-loop) of archaeal tRNAs. Catalyzes the addition of L-lysine to the cyano group of 7-cyano-7-deazaguanine (preQ0)-modified tRNAs at position 15, to generate q0kN15-tRNA, a q0N lysine adduct identified as 7-N-[(5S)-5-amino-5-carboxypentyl]formamidino-7-deazaguanosine. In Methanosarcina acetivorans (strain ATCC 35395 / DSM 2834 / JCM 12185 / C2A), this protein is Archaeosine synthase subunit alpha.